Here is a 285-residue protein sequence, read N- to C-terminus: MAAITAALIKQVREETGAGMMDVKKALTEADGDVARAKEIIRAKGIQAAGKREGRKAQEGTIASTVIDSAAGQTGYAVELNSETDFVAKTPKFIDFADTVLADAVKAGADDIDAVLAAPSQDGTVKEAVEEASALFGEHVKVGQFAKIEGPKVEIYAHKKSVEMPPSIVAMIATDEAGAAVAHEAALQISAMGAQWLTRDDVPEDVVETERRVATEKSLAEGKPEKIVPKIVEGRLNAFFKENVLLEQAYVKDPSKTIGDLFKEVGGQALAFARLEVGKAPEADA.

Residues 84-87 (TDFV) form an involved in Mg(2+) ion dislocation from EF-Tu region.

The protein belongs to the EF-Ts family.

It is found in the cytoplasm. Its function is as follows. Associates with the EF-Tu.GDP complex and induces the exchange of GDP to GTP. It remains bound to the aminoacyl-tRNA.EF-Tu.GTP complex up to the GTP hydrolysis stage on the ribosome. The chain is Elongation factor Ts from Bifidobacterium animalis subsp. lactis (strain AD011).